A 38-amino-acid chain; its full sequence is Large ribosomal subunit protein bL36 (38 aa).

The protein belongs to the bacterial ribosomal protein bL36 family.

The protein is Large ribosomal subunit protein bL36 of Roseiflexus sp. (strain RS-1).